A 229-amino-acid chain; its full sequence is Dolichyldiphosphatase 1 (229 aa).

4 helical membrane-spanning segments follow: residues 27–47, 94–114, 120–140, and 156–176; these read LFNA…ITLI, MPSS…LFYL, FGSK…AAGV, and FCGS…IEYI.

This sequence belongs to the dolichyldiphosphatase family.

The protein localises to the endoplasmic reticulum membrane. The catalysed reaction is a di-trans,poly-cis-dolichyl diphosphate + H2O = a di-trans,poly-cis-dolichyl phosphate + phosphate + H(+). The protein operates within protein modification; protein glycosylation. Its function is as follows. Required for efficient N-glycosylation. Necessary for maintaining optimal levels of dolichol-linked oligosaccharides. Hydrolyzes dolichyl pyrophosphate at a very high rate and dolichyl monophosphate at a much lower rate. Does not act on phosphatidate. The sequence is that of Dolichyldiphosphatase 1 (dolpp1) from Dictyostelium discoideum (Social amoeba).